A 425-amino-acid polypeptide reads, in one-letter code: Dihydroorotase (425 aa).

Zn(2+)-binding residues include H56 and H58. Substrate contacts are provided by residues 58 to 60 and N90; that span reads HYR. 3 residues coordinate Zn(2+): D148, H175, and H228. A substrate-binding site is contributed by N274. D301 serves as a coordination point for Zn(2+). D301 is a catalytic residue. Residues H305 and 319 to 320 contribute to the substrate site; that span reads FG.

Belongs to the metallo-dependent hydrolases superfamily. DHOase family. Class I DHOase subfamily. It depends on Zn(2+) as a cofactor.

The catalysed reaction is (S)-dihydroorotate + H2O = N-carbamoyl-L-aspartate + H(+). It functions in the pathway pyrimidine metabolism; UMP biosynthesis via de novo pathway; (S)-dihydroorotate from bicarbonate: step 3/3. Its function is as follows. Catalyzes the reversible cyclization of carbamoyl aspartate to dihydroorotate. The chain is Dihydroorotase from Lactobacillus delbrueckii subsp. bulgaricus (strain ATCC 11842 / DSM 20081 / BCRC 10696 / JCM 1002 / NBRC 13953 / NCIMB 11778 / NCTC 12712 / WDCM 00102 / Lb 14).